The sequence spans 116 residues: Venom protein 54.1 (116 aa).

The N-terminal stretch at methionine 1–cysteine 19 is a signal peptide.

In terms of processing, contains 3 disulfide bonds. As to expression, expressed by the venom gland.

The protein resides in the secreted. In Lychas mucronatus (Chinese swimming scorpion), this protein is Venom protein 54.1.